The following is a 951-amino-acid chain: Metal transporter CNNM1 (951 aa).

A helical membrane pass occupies residues 23 to 43; it reads AVLLLFFSLSPRPPAAAAWLL. Residues 114-138 form a disordered region; that stretch reads GAGGAAPSAVPTRPPGPQRCREQSD. The region spanning 218–414 is the CNNM transmembrane domain; it reads LLPPAWLRAL…DPYSDLVKEE (197 aa). The next 3 membrane-spanning stretches (helical) occupy residues 222–242, 282–302, and 319–339; these read AWLR…FSGL, LLCT…GWLY, and AGVH…FLGA. CBS domains are found at residues 433-495 and 502-568; these read LTPL…CTPL and YNRP…ILDE. Polar residues-rich tracts occupy residues 731-740 and 814-824; these read SRCSGLNRSE and KAPTTRGTPQT. Disordered stretches follow at residues 731-754 and 795-830; these read SRCS…GSNT and MDSS…DDPV. 2 positions are modified to phosphothreonine: threonine 821 and threonine 824. The residue at position 850 (serine 850) is a Phosphoserine. Residues 903-951 form a disordered region; the sequence is DPEASPCSSDSEENMGKKLLRTLSGRKRKKSADGERASEENSNLTPLIT. Over residues 920–932 the composition is skewed to basic residues; it reads KLLRTLSGRKRKK. The segment covering 942–951 has biased composition (polar residues); the sequence is ENSNLTPLIT.

The protein belongs to the ACDP family. Predominantly expressed in brain and testis, and, at lower levels, in kidney. In the brain, expressed in hippocampal neurons (at protein level).

The protein localises to the cell membrane. Probable metal transporter. This Mus musculus (Mouse) protein is Metal transporter CNNM1 (Cnnm1).